Reading from the N-terminus, the 281-residue chain is uncharacterized protein (281 aa).

8 helical membrane-spanning segments follow: residues 30–50 (AIVA…FIVI), 54–74 (VFIS…GYYF), 76–96 (FNPL…MGWV), 106–126 (TLIG…IDLT), 153–173 (AGLD…FLAI), 198–218 (IALT…IALL), 235–255 (MMAV…ALSY), and 259–279 (LSSG…SLAF).

The protein belongs to the ABC-3 integral membrane protein family.

The protein resides in the cell membrane. This is an uncharacterized protein from Synechocystis sp. (strain ATCC 27184 / PCC 6803 / Kazusa).